A 464-amino-acid chain; its full sequence is Nuclear distribution protein nudF 2 (464 aa).

A LisH domain is found at 9-41; sequence QAAELNKSIIAYLSAHGLAETLAAFRKESDFPD. A coiled-coil region spans residues 63-88; sequence NSTLMKKLLALESHNKALRNELNSTR. 8 WD repeats span residues 112–151, 154–195, 199–238, 241–280, 285–343, 344–383, 388–424, and 426–464; these read SHRDSINCIAFHPKYSLIASGSGDLTIRIWDWEDSTLERT, GHTM…KNVK, GHDHIVSAVRFIPSGNLLASASRDMKVILWNVINGYRVKT, DHTGWVRDISPSFDGQFLLSTGDDMTVRLWEISASQPICK, GHEN…MTLT, GHASWVRAIAFHPGGKYLLSVSDDKTMRCWDLSQQGRCVK, AHDGFITCLKWVPGIAKDTRNGTMTISYQRKGSAELP, and SKLDEVGQPGVQIRCVLATGGEDQKIRVFALQANDRSHK.

Belongs to the WD repeat LIS1/nudF family. As to quaternary structure, self-associates. Interacts with nudE and dynein.

Its subcellular location is the cytoplasm. The protein resides in the cytoskeleton. It localises to the spindle pole. Functionally, positively regulates the activity of the minus-end directed microtubule motor protein dynein. May enhance dynein-mediated microtubule sliding by targeting dynein to the microtubule plus end. Required for nuclear migration during vegetative growth as well as development. Required for retrograde early endosome (EE) transport from the hyphal tip. Required for localization of dynein to the mitotic spindle poles. Recruits additional proteins to the dynein complex at SPBs. This chain is Nuclear distribution protein nudF 2, found in Penicillium rubens (strain ATCC 28089 / DSM 1075 / NRRL 1951 / Wisconsin 54-1255) (Penicillium chrysogenum).